A 261-amino-acid chain; its full sequence is Trifolitoxin immunity protein (261 aa).

In terms of biological role, required for TFX resistance. In Rhizobium leguminosarum bv. trifolii, this protein is Trifolitoxin immunity protein (tfxG).